The following is a 442-amino-acid chain: uncharacterized protein (442 aa).

The next 7 helical transmembrane spans lie at 209-229, 247-267, 284-304, 308-328, 342-362, 374-394, and 402-422; these read FNIWTHLSAFIVFFAVLAYFY, IFFLLSAMKCLGCSVIWHTFS, VGISALIAASIISVEYHAFVC, LRFIFIAFTGTLGLIGIYTPW, IFFFVGLACSGLIPMITMFYI, PVFKSIFSYIIGVLFYGLHIP, and FDIIGNSHQIWHIAIIVGVAF.

The protein localises to the membrane. This is an uncharacterized protein from Schizosaccharomyces pombe (strain 972 / ATCC 24843) (Fission yeast).